A 178-amino-acid polypeptide reads, in one-letter code: Crossover junction endodeoxyribonuclease RuvC (178 aa).

Residues Asp-7, Glu-68, and Asp-141 contribute to the active site. 3 residues coordinate Mg(2+): Asp-7, Glu-68, and Asp-141.

It belongs to the RuvC family. Homodimer which binds Holliday junction (HJ) DNA. The HJ becomes 2-fold symmetrical on binding to RuvC with unstacked arms; it has a different conformation from HJ DNA in complex with RuvA. In the full resolvosome a probable DNA-RuvA(4)-RuvB(12)-RuvC(2) complex forms which resolves the HJ. Mg(2+) serves as cofactor.

The protein resides in the cytoplasm. The enzyme catalyses Endonucleolytic cleavage at a junction such as a reciprocal single-stranded crossover between two homologous DNA duplexes (Holliday junction).. Functionally, the RuvA-RuvB-RuvC complex processes Holliday junction (HJ) DNA during genetic recombination and DNA repair. Endonuclease that resolves HJ intermediates. Cleaves cruciform DNA by making single-stranded nicks across the HJ at symmetrical positions within the homologous arms, yielding a 5'-phosphate and a 3'-hydroxyl group; requires a central core of homology in the junction. The consensus cleavage sequence is 5'-(A/T)TT(C/G)-3'. Cleavage occurs on the 3'-side of the TT dinucleotide at the point of strand exchange. HJ branch migration catalyzed by RuvA-RuvB allows RuvC to scan DNA until it finds its consensus sequence, where it cleaves and resolves the cruciform DNA. The sequence is that of Crossover junction endodeoxyribonuclease RuvC from Parafrankia sp. (strain EAN1pec).